The chain runs to 139 residues: 3-hydroxyacyl-[acyl-carrier-protein] dehydratase FabZ (139 aa).

Residue H46 is part of the active site.

Belongs to the thioester dehydratase family. FabZ subfamily.

Its subcellular location is the cytoplasm. It carries out the reaction a (3R)-hydroxyacyl-[ACP] = a (2E)-enoyl-[ACP] + H2O. Its function is as follows. Involved in unsaturated fatty acids biosynthesis. Catalyzes the dehydration of short chain beta-hydroxyacyl-ACPs and long chain saturated and unsaturated beta-hydroxyacyl-ACPs. This is 3-hydroxyacyl-[acyl-carrier-protein] dehydratase FabZ from Streptococcus pyogenes serotype M1.